Reading from the N-terminus, the 201-residue chain is 3-isopropylmalate dehydratase small subunit (201 aa).

The protein belongs to the LeuD family. LeuD type 1 subfamily. Heterodimer of LeuC and LeuD.

It carries out the reaction (2R,3S)-3-isopropylmalate = (2S)-2-isopropylmalate. It participates in amino-acid biosynthesis; L-leucine biosynthesis; L-leucine from 3-methyl-2-oxobutanoate: step 2/4. Catalyzes the isomerization between 2-isopropylmalate and 3-isopropylmalate, via the formation of 2-isopropylmaleate. The chain is 3-isopropylmalate dehydratase small subunit from Shewanella halifaxensis (strain HAW-EB4).